A 372-amino-acid polypeptide reads, in one-letter code: Serine proteinase inhibitor 1 (372 aa).

This sequence belongs to the serpin family. Poxviruses subfamily.

The protein resides in the host cytoplasm. Plays a role in mediating viral host range. May act to inhibit a caspase independent form of apoptosis to allow efficient virus replication in infected cells. This is Serine proteinase inhibitor 1 (OPG208) from Homo sapiens (Human).